The primary structure comprises 312 residues: Ribosomal protein L11 methyltransferase (312 aa).

Positions 162, 183, 205, and 248 each coordinate S-adenosyl-L-methionine.

It belongs to the methyltransferase superfamily. PrmA family.

It is found in the cytoplasm. It carries out the reaction L-lysyl-[protein] + 3 S-adenosyl-L-methionine = N(6),N(6),N(6)-trimethyl-L-lysyl-[protein] + 3 S-adenosyl-L-homocysteine + 3 H(+). In terms of biological role, methylates ribosomal protein L11. This Bacillus anthracis (strain A0248) protein is Ribosomal protein L11 methyltransferase.